The chain runs to 306 residues: 4-diphosphocytidyl-2-C-methyl-D-erythritol kinase (306 aa).

Lysine 11 is an active-site residue. Residue 113–123 (PPEGGIGGGSS) coordinates ATP. The active site involves aspartate 153.

Belongs to the GHMP kinase family. IspE subfamily.

The catalysed reaction is 4-CDP-2-C-methyl-D-erythritol + ATP = 4-CDP-2-C-methyl-D-erythritol 2-phosphate + ADP + H(+). It participates in isoprenoid biosynthesis; isopentenyl diphosphate biosynthesis via DXP pathway; isopentenyl diphosphate from 1-deoxy-D-xylulose 5-phosphate: step 3/6. Catalyzes the phosphorylation of the position 2 hydroxy group of 4-diphosphocytidyl-2C-methyl-D-erythritol. This is 4-diphosphocytidyl-2-C-methyl-D-erythritol kinase from Leptospira biflexa serovar Patoc (strain Patoc 1 / ATCC 23582 / Paris).